A 427-amino-acid polypeptide reads, in one-letter code: Dorsalin-1 (427 aa).

The first 20 residues, methionine 1–threonine 20, serve as a signal peptide directing secretion. Positions arginine 21–arginine 318 are excised as a propeptide. N-linked (GlcNAc...) asparagine glycans are attached at residues asparagine 71, asparagine 136, asparagine 265, and asparagine 292. Residues lysine 288–glycine 321 are disordered. Positions alanine 307–glycine 321 are enriched in basic residues. Intrachain disulfides connect cysteine 325–cysteine 391, cysteine 354–cysteine 424, and cysteine 358–cysteine 426.

This sequence belongs to the TGF-beta family. Homodimer; disulfide-linked. As to expression, expressed selectively in the dorsal neural tube. Lower levels seen in kidney and myotomal cells.

The protein localises to the secreted. Appears to regulate cell differentiation within the neural tube. May regulate the differentiation of cell types along the dorsoventral axis of the neural tube, acting in conjunction with distinct ventralizing signals from the notochord and floor plate. Controls the cell differentiation in the neural tube in several ways: (1) promotes the differentiation of cell types that derive from the dorsal neural tube. (2) ensures that the dorsal neural tube is refractory to ventralizing species from the notochord. (3) can diffuse and influence the fate of cells in more ventral regions of the neural tube. This Gallus gallus (Chicken) protein is Dorsalin-1 (DSL1).